Reading from the N-terminus, the 310-residue chain is Manganese ABC transporter substrate-binding lipoprotein scaA (310 aa).

Positions 1–19 are cleaved as a signal peptide; sequence MKKCRFLVLLLLAFVGLAA. Cysteine 20 carries N-palmitoyl cysteine lipidation. A lipid anchor (S-diacylglycerol cysteine) is attached at cysteine 20. The Mn(2+) site is built by histidine 68, histidine 140, glutamate 206, and aspartate 281.

The protein belongs to the bacterial solute-binding protein 9 family. Lipoprotein receptor antigen (Lrai) subfamily. As to quaternary structure, the complex is composed of two ATP-binding proteins (ScaC), two transmembrane proteins (ScaB) and a solute-binding protein (ScaA).

Its subcellular location is the cell membrane. Functionally, part of ATP-binding cassette (ABC) transport system ScaABC involved in manganese import. Essential for growth under Mn(2+)-limiting conditions. Also acts as an adhesin which is involved on adherence to extracellular matrix. It is an important factor in pathogenesis and infection. The chain is Manganese ABC transporter substrate-binding lipoprotein scaA from Streptococcus gordonii.